Consider the following 299-residue polypeptide: Transcription elongation factor A protein 2 (299 aa).

In terms of domain architecture, TFIIS N-terminal spans 5–82 (EEIARIARRL…KSWKKLLDVS (78 aa)). Residue lysine 57 forms a Glycyl lysine isopeptide (Lys-Gly) (interchain with G-Cter in ubiquitin) linkage. Phosphoserine occurs at positions 59 and 100. A disordered region spans residues 83–126 (DGKSRDQGRGTPLPTSSSKDASGTTDLSCKKPDPPRTSSTPRIT). Positions 95–109 (LPTSSSKDASGTTDL) are enriched in polar residues. The region spanning 138–254 (VRNKCREMLT…EHQMARTGGT (117 aa)) is the TFIIS central domain. Residues 257-297 (DLFTCNKCRKKNCTYTQVQTRSSDEPMTTYVVCNECGNRWK) form a TFIIS-type zinc finger. 4 residues coordinate Zn(2+): cysteine 261, cysteine 264, cysteine 289, and cysteine 292.

It belongs to the TFS-II family. As to quaternary structure, interacts with the basal transcription factor GTF2B. Interacts with REXO1. Testis specific.

The protein resides in the nucleus. Its function is as follows. Necessary for efficient RNA polymerase II transcription elongation past template-encoded arresting sites. The arresting sites in DNA have the property of trapping a certain fraction of elongating RNA polymerases that pass through, resulting in locked ternary complexes. Cleavage of the nascent transcript by S-II allows the resumption of elongation from the new 3'-terminus. The chain is Transcription elongation factor A protein 2 (Tcea2) from Rattus norvegicus (Rat).